We begin with the raw amino-acid sequence, 113 residues long: Large ribosomal subunit protein P2 (113 aa).

The disordered stretch occupies residues 60 to 113; it reads SKVSSLSAGAGPSGGAAAAGADAGAAEAEKEEEPQEEEADVNMGDIFGGDDEDY. Low complexity predominate over residues 74–85; it reads GAAAAGADAGAA. Acidic residues predominate over residues 88–99; sequence EKEEEPQEEEAD.

It belongs to the eukaryotic ribosomal protein P1/P2 family. In terms of assembly, P1 and P2 exist as dimers at the large ribosomal subunit. Post-translationally, phosphorylated.

Its function is as follows. Plays an important role in the elongation step of protein synthesis. This is Large ribosomal subunit protein P2 from Euplotes raikovi.